The primary structure comprises 415 residues: MSLITDISRQAAKAAHQLALLDTETKNKVLLDMAAALRAEKAFIIKENESDLAAARDNNLAAAMVDRLTLNDERVEAMAEGIEVIVSLDDPVGQLRDITERPNGIKIRKMRVPLGVVCMIYEARPNVTADAGALCFKSGNSVILRGGKEALKSSQAIASVMHSVLAKHNLPEALISVIPDPDRGLLMELMQQRDSIDLIIPRGGEGLINFVTENSTIPVIQHFKGVCHLYVDKDADLEVAINLLLNGKTQRTGVCNALEGLVVHQDIANEFLNLCAVVLRQEGVKINADSQAATYFDNATVLGDDEFGEEYLDLEIAIRVVPSFAAAVEHIAQFGSHHTEVICTKNAATAELFQRSVDASVVTVNASSRFSDGSQLGLGAEIGIATSKLHAYGPMGLESLTTEKYLVNGDGQIRE.

It belongs to the gamma-glutamyl phosphate reductase family.

It localises to the cytoplasm. The catalysed reaction is L-glutamate 5-semialdehyde + phosphate + NADP(+) = L-glutamyl 5-phosphate + NADPH + H(+). Its pathway is amino-acid biosynthesis; L-proline biosynthesis; L-glutamate 5-semialdehyde from L-glutamate: step 2/2. Catalyzes the NADPH-dependent reduction of L-glutamate 5-phosphate into L-glutamate 5-semialdehyde and phosphate. The product spontaneously undergoes cyclization to form 1-pyrroline-5-carboxylate. The chain is Gamma-glutamyl phosphate reductase from Pseudoalteromonas translucida (strain TAC 125).